The sequence spans 502 residues: Glycerate kinase (502 aa).

Belongs to the glycerate kinase type-2 family.

The protein resides in the cytoplasm. It carries out the reaction (R)-glycerate + ATP = (2R)-3-phosphoglycerate + ADP + H(+). The polypeptide is Glycerate kinase (glyctk) (Danio rerio (Zebrafish)).